Consider the following 274-residue polypeptide: Ribosomal RNA small subunit methyltransferase A (274 aa).

S-adenosyl-L-methionine-binding residues include asparagine 28, leucine 30, glycine 55, glutamate 77, aspartate 103, and asparagine 122.

It belongs to the class I-like SAM-binding methyltransferase superfamily. rRNA adenine N(6)-methyltransferase family. RsmA subfamily.

It localises to the cytoplasm. It catalyses the reaction adenosine(1518)/adenosine(1519) in 16S rRNA + 4 S-adenosyl-L-methionine = N(6)-dimethyladenosine(1518)/N(6)-dimethyladenosine(1519) in 16S rRNA + 4 S-adenosyl-L-homocysteine + 4 H(+). Its function is as follows. Specifically dimethylates two adjacent adenosines (A1518 and A1519) in the loop of a conserved hairpin near the 3'-end of 16S rRNA in the 30S particle. May play a critical role in biogenesis of 30S subunits. The polypeptide is Ribosomal RNA small subunit methyltransferase A (Rhizobium meliloti (strain 1021) (Ensifer meliloti)).